Reading from the N-terminus, the 166-residue chain is Mitochondrial inner membrane protease subunit 1 (166 aa).

Catalysis depends on residues Ser-40 and Lys-83.

It belongs to the peptidase S26 family. IMP1 subfamily. Heterodimer of 2 subunits, IMMPL1 and IMMPL2.

The protein localises to the mitochondrion inner membrane. Catalyzes the removal of transit peptides required for the targeting of proteins from the mitochondrial matrix, across the inner membrane, into the inter-membrane space. Known to process the nuclear encoded protein DIABLO. The chain is Mitochondrial inner membrane protease subunit 1 (Immp1l) from Mus musculus (Mouse).